The sequence spans 309 residues: Anamorsin (309 aa).

The interval isoleucine 6–serine 172 is N-terminal SAM-like domain. The segment at glutamine 173 to leucine 222 is linker. Residues serine 182, serine 183, and serine 213 each carry the phosphoserine modification. [2Fe-2S] cluster-binding residues include cysteine 235, cysteine 244, cysteine 247, and cysteine 249. The fe-S binding site A stretch occupies residues cysteine 235 to cysteine 249. At serine 269 the chain carries Phosphoserine. Positions 271, 274, 282, and 285 each coordinate [4Fe-4S] cluster. 2 consecutive short sequence motifs (cx2C motif) follow at residues cysteine 271–cysteine 274 and cysteine 282–cysteine 285. Residues cysteine 271–cysteine 285 form a fe-S binding site B region. Phosphoserine is present on residues serine 302 and serine 304.

It belongs to the anamorsin family. Monomer. Interacts with NDOR1. Interacts with CHCHD4. [2Fe-2S] cluster serves as cofactor. [4Fe-4S] cluster is required as a cofactor.

It is found in the cytoplasm. The protein localises to the nucleus. Its subcellular location is the mitochondrion intermembrane space. Its function is as follows. Component of the cytosolic iron-sulfur (Fe-S) protein assembly (CIA) machinery required for the maturation of extramitochondrial Fe-S proteins. Part of an electron transfer chain functioning in an early step of cytosolic Fe-S biogenesis, facilitating the de novo assembly of a [4Fe-4S] cluster on the scaffold complex NUBP1-NUBP2. Electrons are transferred to CIAPIN1 from NADPH via the FAD- and FMN-containing protein NDOR1. NDOR1-CIAPIN1 are also required for the assembly of the diferric tyrosyl radical cofactor of ribonucleotide reductase (RNR), probably by providing electrons for reduction during radical cofactor maturation in the catalytic small subunit. Has anti-apoptotic effects in the cell. Involved in negative control of cell death upon cytokine withdrawal. Promotes development of hematopoietic cells. The polypeptide is Anamorsin (Mus musculus (Mouse)).